Here is a 63-residue protein sequence, read N- to C-terminus: Large ribosomal subunit protein bL32 (63 aa).

The interval methionine 1–alanine 22 is disordered. A compositionally biased stretch (basic residues) spans lysine 7 to alanine 18.

It belongs to the bacterial ribosomal protein bL32 family.

The protein is Large ribosomal subunit protein bL32 of Chlorobium limicola (strain DSM 245 / NBRC 103803 / 6330).